The chain runs to 151 residues: uncharacterized protein (151 aa).

The protein to M.jannaschii MJ1244 and MJ1245.

This is an uncharacterized protein from Methanothermobacter thermautotrophicus (strain ATCC 29096 / DSM 1053 / JCM 10044 / NBRC 100330 / Delta H) (Methanobacterium thermoautotrophicum).